The sequence spans 267 residues: CD82 antigen (267 aa).

Residues 1 to 11 (MGSACIKVTKY) lie on the Cytoplasmic side of the membrane. Residue Cys-5 is the site of S-palmitoyl cysteine attachment. A helical membrane pass occupies residues 12–32 (FLFLFNLIFFILGAVILGFGV). Residues 33 to 53 (WILADKSSFISVLQTSSSSLR) lie on the Extracellular side of the membrane. The chain crosses the membrane as a helical span at residues 54–72 (MGAYVFIGVGAVTMLMGFL). Over 73–83 (GCIGAVNEVRC) the chain is Cytoplasmic. Cys-74 carries S-palmitoyl cysteine lipidation. Residues 84 to 110 (LLGLYFAFLLLILIAQVTAGALFYFNM) form a helical membrane-spanning segment. Over 111 to 228 (GKLKQEMGGI…KVQAWLQENL (118 aa)) the chain is Extracellular. N-linked (GlcNAc...) asparagine glycosylation is found at Asn-129, Asn-157, and Asn-198. A helical transmembrane segment spans residues 229–250 (GIILGVGVGVAIIELLGMVLSI). At 251-267 (CLCRHVHSEDYSKVPKY) the chain is on the cytoplasmic side.

This sequence belongs to the tetraspanin (TM4SF) family. As to quaternary structure, forms homooligomers. Interacts directly with IGSF8. Interacts with EGFR. Interacts with VEGFA and PDGFB. Interacts with ITGA4. Interacts with ITGA6; this interaction reduces ITGA6 cell surface expression. Interacts with ITGB1. Interacts with TLR4; this interaction inhibits TLR4-mediated signaling pathway. Interacts with TLR9. Interacts with PLAUR. Palmitoylated. Palmitoylation contributes to oligomerization and surface expression. Lymphoid specific.

Its subcellular location is the cell membrane. It localises to the cytoplasmic vesicle. The protein localises to the phagosome. In terms of biological role, structural component of specialized membrane microdomains known as tetraspanin-enriched microdomains (TERMs), which act as platforms for receptor clustering and signaling. Participates thereby in diverse biological functions such as cell signal transduction, adhesion, migration and protein trafficking. Acts as a attenuator of EGF signaling, facilitating ligand-induced endocytosis of the receptor and its subsequent desensitization. Mechanistically, modulates ligand-induced ubiquitination and trafficking of EGFR via E3 ligase CBL phosphorylation by PKC. Increases cell-matrix adhesion by regulating the membrane organization of integrin alpha4/ITA4. Modulates adhesion and suppresses cell migration through other integrins such as the alpha6/ITGA6 and beta1/ITGB1. Decreases cell-associated plasminogen activation by interfering with the interaction between urokinase-type plasminogen activator/PLAU and its receptor PLAUR. Associates with CD4 or CD8 and delivers costimulatory signals for the TCR/CD3 pathway. Plays a role in TLR9 trafficking to acidified CpG-containing compartments by controlling interaction between TLR9 and VAMP3 and subsequent myddosome assembly. Inhibits LPS-induced inflammatory response by preventing binding of LPS to TLR4 on the cell surface. Plays a role in the activation of macrophages into anti-inflammatory phenotypes. Independently of Toll-like receptor (TLR) signaling, is recruited to pathogen-containing phagosomes prior to fusion with lysosomes and thereby participates in antigen presentation. Also acts to control angiogenesis and switch angiogenic milieu to quiescent state by binding and sequestering VEGFA and PDGFB to inhibit the signaling they trigger via their respective cell surface receptor. The polypeptide is CD82 antigen (CD82) (Homo sapiens (Human)).